The sequence spans 246 residues: Chanoclavine-I dehydrogenase easD (246 aa).

Positions 1 to 20 (MASVSSKIFAITGGASGIGA) are cleaved as a signal peptide. NADP(+) is bound by residues I18, D66, R132, Y169, and K173. The Proton donor role is filled by Y169. Residue K173 is the Lowers pKa of active site Tyr of the active site.

This sequence belongs to the short-chain dehydrogenases/reductases (SDR) family. Homotetramer.

It carries out the reaction chanoclavine-I + NAD(+) = chanoclavine-I aldehyde + NADH + H(+). The protein operates within alkaloid biosynthesis; ergot alkaloid biosynthesis. Its function is as follows. Chanoclavine-I dehydrogenase; part of the gene cluster that mediates the biosynthesis of fungal ergot alkaloid. DmaW catalyzes the first step of ergot alkaloid biosynthesis by condensing dimethylallyl diphosphate (DMAP) and tryptophan to form 4-dimethylallyl-L-tryptophan. The second step is catalyzed by the methyltransferase easF that methylates 4-dimethylallyl-L-tryptophan in the presence of S-adenosyl-L-methionine, resulting in the formation of 4-dimethylallyl-L-abrine. The catalase easC and the FAD-dependent oxidoreductase easE then transform 4-dimethylallyl-L-abrine to chanoclavine-I which is further oxidized by easD in the presence of NAD(+), resulting in the formation of chanoclavine-I aldehyde. Chanoclavine-I aldehyde is the precursor of ergoamides and ergopeptines in Clavicipitaceae, and clavine-type alcaloids such as fumiclavine in Trichocomaceae. However, the metabolites downstream of chanoclavine-I aldehyde in Arthrodermataceae have not been identified yet. This Arthroderma benhamiae (strain ATCC MYA-4681 / CBS 112371) (Trichophyton mentagrophytes) protein is Chanoclavine-I dehydrogenase easD.